We begin with the raw amino-acid sequence, 717 residues long: Polyribonucleotide nucleotidyltransferase (717 aa).

Aspartate 487 and aspartate 493 together coordinate Mg(2+). In terms of domain architecture, KH spans 554–613; that stretch reads PKIITMAINPDKIRDVIGPSGKQINKIIEETGVKIDIEQDGTVFISSINQEMNEKAKKII. Residues 623 to 691 enclose the S1 motif domain; it reads GEIYLGKVKR…KQGRVNLSRK (69 aa).

It belongs to the polyribonucleotide nucleotidyltransferase family. It depends on Mg(2+) as a cofactor.

It localises to the cytoplasm. The enzyme catalyses RNA(n+1) + phosphate = RNA(n) + a ribonucleoside 5'-diphosphate. Its function is as follows. Involved in mRNA degradation. Catalyzes the phosphorolysis of single-stranded polyribonucleotides processively in the 3'- to 5'-direction. The chain is Polyribonucleotide nucleotidyltransferase from Bacillus mycoides (strain KBAB4) (Bacillus weihenstephanensis).